A 47-amino-acid polypeptide reads, in one-letter code: Defensin-like protein 2 (47 aa).

Intrachain disulfides connect Cys-3-Cys-47, Cys-14-Cys-36, Cys-20-Cys-41, and Cys-24-Cys-43.

Belongs to the DEFL family.

This is Defensin-like protein 2 from Zea mays (Maize).